Consider the following 323-residue polypeptide: Aldo-keto reductase family 1 member C4 (323 aa).

NADP(+) is bound by residues 20–24 (GFGTY) and D50. The active-site Proton donor is the Y55. Residue H117 coordinates substrate. NADP(+) contacts are provided by residues 166 to 167 (SN), Q190, 216 to 221 (HSALGT), and 270 to 280 (KSYNEQRIREN).

It belongs to the aldo/keto reductase family. Monomer. Post-translationally, the N-terminus is blocked. As to expression, liver specific.

It is found in the cytoplasm. It localises to the cytosol. It carries out the reaction a 3alpha-hydroxysteroid + NADP(+) = a 3-oxosteroid + NADPH + H(+). The enzyme catalyses a 3alpha-hydroxysteroid + NAD(+) = a 3-oxosteroid + NADH + H(+). The catalysed reaction is 5alpha-androstane-3alpha,17beta-diol + NADP(+) = 17beta-hydroxy-5alpha-androstan-3-one + NADPH + H(+). It catalyses the reaction 5alpha-androstane-3beta,17beta-diol + NADP(+) = 17beta-hydroxy-5alpha-androstan-3-one + NADPH + H(+). It carries out the reaction 5alpha-androstane-3alpha,17beta-diol + NAD(+) = 17beta-hydroxy-5alpha-androstan-3-one + NADH + H(+). The enzyme catalyses 17beta-estradiol + NADP(+) = estrone + NADPH + H(+). The catalysed reaction is 17beta-estradiol + NAD(+) = estrone + NADH + H(+). It catalyses the reaction (20S)-hydroxypregn-4-en-3-one + NADP(+) = progesterone + NADPH + H(+). It carries out the reaction (20S)-hydroxypregn-4-en-3-one + NAD(+) = progesterone + NADH + H(+). The enzyme catalyses androsterone + NADP(+) = 5alpha-androstan-3,17-dione + NADPH + H(+). The catalysed reaction is testosterone + NADP(+) = androst-4-ene-3,17-dione + NADPH + H(+). It catalyses the reaction testosterone + NAD(+) = androst-4-ene-3,17-dione + NADH + H(+). It carries out the reaction 3alpha-hydroxy-5alpha-androstane 17-O-(beta-D-glucuronate) + NADP(+) = 5alpha-dihydrotestosterone 17-O-(beta-D-glucuronate) + NADPH + H(+). The enzyme catalyses (3beta,5alpha,17beta)-3-hydroxy-androstan-17-yl sulfate + NADP(+) = 5alpha-dihydrotestosterone sulfate + NADPH + H(+). The catalysed reaction is 5alpha-androstane-3alpha,17beta-diol + NAD(+) = androsterone + NADH + H(+). It catalyses the reaction chlordecone alcohol + NADP(+) = chlordecone + NADPH + H(+). Its pathway is steroid metabolism. Its activity is regulated as follows. Inhibited by nonsteroidal the anti-inflammatory drugs (NSAID) flufenamic. The oxidation reaction is inhibited by low micromolar concentrations of NADPH. In terms of biological role, cytosolic aldo-keto reductase that catalyzes the NADH and NADPH-dependent reduction of ketosteroids to hydroxysteroids. Liver specific enzyme that acts as an NAD(P)(H)-dependent 3-, 17- and 20-ketosteroid reductase on the steroid nucleus and side chain. Displays the ability to catalyze both oxidation and reduction in vitro, but most probably acts as a reductase in vivo since the oxidase activity measured in vitro is inhibited by physiological concentration of NADPH. Acts preferentially as a 3-alpha-hydroxysteroid dehydrogenase (HSD) with a subsidiary 3-beta-HSD activity. Catalyzes efficiently the transformation of the potent androgen 5-alpha-dihydrotestosterone (5alpha-DHT or 17beta-hydroxy-5alpha-androstan-3-one) into the less active form, 5-alpha-androstan-3-alpha,17-beta-diol (3-alpha-diol). Catalyzes the reduction of estrone into 17beta-estradiol but with low efficiency. Metabolizes a broad spectrum of natural and synthetic therapeutic steroid and plays an important role in metabolism of androgens, estrogens, progestereone and conjugated steroids. Catalyzes the biotransformation of the pesticide chlordecone (kepone) to its corresponding alcohol leading to increased biliary excretion of the pesticide and concomitant reduction of its neurotoxicity since bile is the major excretory route. The polypeptide is Aldo-keto reductase family 1 member C4 (AKR1C4) (Homo sapiens (Human)).